The primary structure comprises 596 residues: uncharacterized protein (596 aa).

The Helicase ATP-binding domain occupies 44–203 (KYLASQPRDF…PFVTYALDAD (160 aa)). Positions 285–432 (RLRQLRTHVP…PHRESTDNPL (148 aa)) constitute a Helicase C-terminal domain. Disordered regions lie at residues 420 to 444 (LGKP…QTEQ) and 506 to 533 (EQLQ…SVHG). Residues 510–523 (KRTAAQQASSTPDR) show a composition bias toward polar residues.

This sequence to M.tuberculosis Rv2917.

This is an uncharacterized protein from Mycobacterium leprae (strain TN).